We begin with the raw amino-acid sequence, 374 residues long: MNPSKSVTPPLWLLAELTYRCPLQCPYCSNPLDFSQQKKELTTEQWIEVFRQARAMGSVQLGFSGGEPLTRKDLPELIRAARDLGFYTNLITSGIGLTAKKLDAFADAGLDHIQISFQASDETLNAALAGSKKAFQQKLEMAKAVKAHGYPMVLNFVLHRHNIDQIDKIIDLCIELDADDVELATCQFYGWAQLNREGLLPTREQIANAEAVVADYRQRMGASGNLTNPAVRDAGLLRRAAETLHGRMGIDLPQRHADCTALPCHSARQLPVAFPSVLERTLDDIWYNSFGFNRYRGFDWMPEPCRSCDEKAKDFGGCRCQAFMLTGDADNTDPVCSKSPHHGKILEARREANCSDIKIQQLQFRNRSNSELIF.

The region spanning 7 to 222 (VTPPLWLLAE…VADYRQRMGA (216 aa)) is the Radical SAM core domain. Positions 21, 25, and 28 each coordinate [4Fe-4S] cluster.

Belongs to the radical SAM superfamily. PqqE family. As to quaternary structure, interacts with PqqD. The interaction is necessary for activity of PqqE. [4Fe-4S] cluster is required as a cofactor.

The catalysed reaction is [PQQ precursor protein] + S-adenosyl-L-methionine = E-Y cross-linked-[PQQ precursor protein] + 5'-deoxyadenosine + L-methionine + H(+). It participates in cofactor biosynthesis; pyrroloquinoline quinone biosynthesis. Its function is as follows. Catalyzes the cross-linking of a glutamate residue and a tyrosine residue in the PqqA protein as part of the biosynthesis of pyrroloquinoline quinone (PQQ). The protein is PqqA peptide cyclase of Kluyvera intermedia (Enterobacter intermedius).